The chain runs to 63 residues: Hyphancin-3F (63 aa).

The first 22 residues, 1–22 (MNFSRILFFVFACFVALASVSA), serve as a signal peptide directing secretion. A propeptide spans 23–26 (APEP) (removed by a dipeptidylpeptidase). At leucine 61 the chain carries Leucine amide.

The protein belongs to the cecropin family.

It localises to the secreted. Its function is as follows. Has antibacterial activity. The sequence is that of Hyphancin-3F from Hyphantria cunea (Fall webworm moth).